Consider the following 310-residue polypeptide: Ribose-phosphate pyrophosphokinase (310 aa).

ATP-binding positions include 34 to 36 and 93 to 94; these read DQE and RQ. Residues histidine 127 and aspartate 167 each contribute to the Mg(2+) site. The active site involves lysine 190. Residues arginine 192, aspartate 216, and 220–224 contribute to the D-ribose 5-phosphate site; that span reads DSGGT.

The protein belongs to the ribose-phosphate pyrophosphokinase family. Class I subfamily. In terms of assembly, homohexamer. The cofactor is Mg(2+).

The protein localises to the cytoplasm. It catalyses the reaction D-ribose 5-phosphate + ATP = 5-phospho-alpha-D-ribose 1-diphosphate + AMP + H(+). The protein operates within metabolic intermediate biosynthesis; 5-phospho-alpha-D-ribose 1-diphosphate biosynthesis; 5-phospho-alpha-D-ribose 1-diphosphate from D-ribose 5-phosphate (route I): step 1/1. Involved in the biosynthesis of the central metabolite phospho-alpha-D-ribosyl-1-pyrophosphate (PRPP) via the transfer of pyrophosphoryl group from ATP to 1-hydroxyl of ribose-5-phosphate (Rib-5-P). This Rhizobium meliloti (strain 1021) (Ensifer meliloti) protein is Ribose-phosphate pyrophosphokinase.